We begin with the raw amino-acid sequence, 448 residues long: Zinc finger and BTB domain-containing protein 44 (448 aa).

A BTB domain is found at 31–98 (CDITIRVQDK…AYTATLSINT (68 aa)). The segment covering 289–298 (LSDEEVHEEV) has biased composition (basic and acidic residues). Positions 289–320 (LSDEEVHEEVSQPVSASQSSMSDQQTVPGSEQ) are disordered. Over residues 299–313 (SQPVSASQSSMSDQQ) the composition is skewed to low complexity. 2 C2H2-type zinc fingers span residues 394-416 (FQCP…MLIH) and 422-444 (FQCD…RLKH).

The protein resides in the nucleus. The polypeptide is Zinc finger and BTB domain-containing protein 44 (zbtb44) (Xenopus tropicalis (Western clawed frog)).